The chain runs to 395 residues: Putative nickel insertion protein (395 aa).

The protein belongs to the LarC family.

This Roseiflexus castenholzii (strain DSM 13941 / HLO8) protein is Putative nickel insertion protein.